Here is a 33-residue protein sequence, read N- to C-terminus: Phospholipase A2 homolog BmarPLA2 (33 aa).

This sequence belongs to the phospholipase A2 family. Group II subfamily. K49 sub-subfamily. In terms of assembly, homodimer; non-covalently linked. Expressed by the venom gland.

It localises to the secreted. Its function is as follows. Snake phospholipase A2 homolog that lacks enzymatic activity. May display myotoxin activity. In isolated heart decreases cardiac frequency. Also decreases mean arterial pressure. Does not show antimicrobial activity. Does not change renal parameters (such as perfusion pressure, renal vascular resistance, urinary flow, glomerular filtration rate and sodium tubular transport). The chain is Phospholipase A2 homolog BmarPLA2 from Bothrops marajoensis (Marajo lancehead).